A 173-amino-acid chain; its full sequence is uncharacterized protein (173 aa).

This sequence belongs to the ycf73 family.

Its subcellular location is the plastid. It is found in the chloroplast. This is an uncharacterized protein from Saccharum hybrid (Sugarcane).